The sequence spans 611 residues: Major facilitator superfamily domain-containing protein YCR023C (611 aa).

Residues 1 to 89 (MARQKLTFKE…GRFSEKHGRK (89 aa)) are Extracellular-facing. Residues 90–110 (ITLTCGLIGTSVSLLILGFSR) form a helical membrane-spanning segment. Topologically, residues 111 to 152 (NFYQALVARSLMGLLNGNVGVIRTIIGEIATERKHQALAFST) are cytoplasmic. The helical transmembrane segment at 153–173 (MPLLFQFGAVVGPMIGGFLVF) threads the bilayer. Over 174–199 (RDGTMNEVPLWFPHFAKRIIRSYPYA) the chain is Extracellular. Residues 200–220 (LPNVVVCMFLMFGLTNATLFL) traverse the membrane as a helical segment. Residues 221 to 353 (EETHPAFKDR…SIFHHVFHTK (133 aa)) are Cytoplasmic-facing. Residues 261–271 (DDSENIHHRNE) show a composition bias toward basic and acidic residues. The segment at 261-301 (DDSENIHHRNENVNSIRGQDSEEDENSPLVNTTNDDDTESI) is disordered. The residue at position 313 (serine 313) is a Phosphoserine. Residues 354 to 372 (VFYPISVNFIMALHLIVYN) form a helical membrane-spanning segment. Residues 373-413 (EFLPVFLAYDLAVDPENPKKLASKFPWKISGGIGYEPEQTG) lie on the Extracellular side of the membrane. Residues 414–434 (TLLSTTGIFGCFVVIFIFPIV) form a helical membrane-spanning segment. The Cytoplasmic segment spans residues 435–442 (DRNFDCLT). The helical transmembrane segment at 443–463 (IFRTLVKLYPIMYVMVPYVVF) threads the bilayer. The Extracellular segment spans residues 464–542 (LQNERIPSWY…YIMSWSQQND (79 aa)). A helical transmembrane segment spans residues 543 to 563 (VAWVSWWSLSLFCMVALYQSY). Over 564–611 (KIAPIDDNENELHGQGSEDAYNSQSQSSDLRMAHRSSLSSLSNQRCTT) the chain is Cytoplasmic. Serine 603 carries the post-translational modification Phosphoserine.

It belongs to the major facilitator superfamily.

Its subcellular location is the membrane. The catalysed reaction is chloride(in) = chloride(out). Its function is as follows. Outward-rectifying chloride channel involved in chloride homeostasis. This is Major facilitator superfamily domain-containing protein YCR023C from Saccharomyces cerevisiae (strain ATCC 204508 / S288c) (Baker's yeast).